The sequence spans 343 residues: ATP-dependent (S)-NAD(P)H-hydrate dehydratase (343 aa).

A mitochondrion-targeting transit peptide spans 1 to 42 (MAVCPYGAAAVVMALLSAAIAFHCSPLLAVLQRALSLHTAHA). The 292-residue stretch at 49–340 (LFQLVRNIVP…AEVGAAFSKL (292 aa)) folds into the YjeF C-terminal domain. Lys63 is subject to N6-acetyllysine. A Phosphotyrosine modification is found at Tyr81. (6S)-NADPHX is bound by residues Gly149 and 202–208 (NHVEFSR). ATP contacts are provided by residues 242–246 (KGEQD) and 261–270 (GSSRRCGGQG). Asp271 is a (6S)-NADPHX binding site.

This sequence belongs to the NnrD/CARKD family. Requires Mg(2+) as cofactor.

It is found in the mitochondrion. It catalyses the reaction (6S)-NADHX + ATP = ADP + phosphate + NADH + H(+). It carries out the reaction (6S)-NADPHX + ATP = ADP + phosphate + NADPH + H(+). Functionally, catalyzes the dehydration of the S-form of NAD(P)HX at the expense of ATP, which is converted to ADP. Together with NAD(P)HX epimerase, which catalyzes the epimerization of the S- and R-forms, the enzyme allows the repair of both epimers of NAD(P)HX, a damaged form of NAD(P)H that is a result of enzymatic or heat-dependent hydration. The protein is ATP-dependent (S)-NAD(P)H-hydrate dehydratase of Rattus norvegicus (Rat).